A 201-amino-acid chain; its full sequence is UPF0301 protein Rleg2_0617 (201 aa).

The protein belongs to the UPF0301 (AlgH) family.

This chain is UPF0301 protein Rleg2_0617, found in Rhizobium leguminosarum bv. trifolii (strain WSM2304).